The primary structure comprises 63 residues: Large ribosomal subunit protein uL29 (63 aa).

The protein belongs to the universal ribosomal protein uL29 family.

This is Large ribosomal subunit protein uL29 from Shewanella denitrificans (strain OS217 / ATCC BAA-1090 / DSM 15013).